A 183-amino-acid chain; its full sequence is Ras-like protein (183 aa).

GTP is bound at residue 10-17; sequence GAGGVGKS. An Effector region motif is present at residues 32–40; it reads YDPTIEDSY. Residues 57–61 and 116–119 each bind GTP; these read DTAGQ and NKCD.

This sequence belongs to the small GTPase superfamily. Ras family.

It localises to the cell membrane. The catalysed reaction is GTP + H2O = GDP + phosphate + H(+). With respect to regulation, alternates between an inactive form bound to GDP and an active form bound to GTP. Activated by a guanine nucleotide-exchange factor (GEF) and inactivated by a GTPase-activating protein (GAP). Ras proteins bind GDP/GTP and possess intrinsic GTPase activity. The polypeptide is Ras-like protein (Carassius auratus (Goldfish)).